Consider the following 382-residue polypeptide: Alkanesulfonate monooxygenase (382 aa).

Belongs to the SsuD family. As to quaternary structure, homotetramer.

It catalyses the reaction an alkanesulfonate + FMNH2 + O2 = an aldehyde + FMN + sulfite + H2O + 2 H(+). Catalyzes the desulfonation of aliphatic sulfonates. This Buttiauxella sp. (strain PNBS) protein is Alkanesulfonate monooxygenase.